Reading from the N-terminus, the 81-residue chain is ATP synthase subunit c (81 aa).

Transmembrane regions (helical) follow at residues 5-25 and 57-77; these read IAAGALIGGGLIMAGGAIGAG and VGLVEAAYFINLAFMALFVFA.

The protein belongs to the ATPase C chain family. In terms of assembly, F-type ATPases have 2 components, F(1) - the catalytic core - and F(0) - the membrane proton channel. F(1) has five subunits: alpha(3), beta(3), gamma(1), delta(1), epsilon(1). F(0) has three main subunits: a(1), b(2) and c(10-14). The alpha and beta chains form an alternating ring which encloses part of the gamma chain. F(1) is attached to F(0) by a central stalk formed by the gamma and epsilon chains, while a peripheral stalk is formed by the delta and b chains.

The protein resides in the cell membrane. F(1)F(0) ATP synthase produces ATP from ADP in the presence of a proton or sodium gradient. F-type ATPases consist of two structural domains, F(1) containing the extramembraneous catalytic core and F(0) containing the membrane proton channel, linked together by a central stalk and a peripheral stalk. During catalysis, ATP synthesis in the catalytic domain of F(1) is coupled via a rotary mechanism of the central stalk subunits to proton translocation. Functionally, key component of the F(0) channel; it plays a direct role in translocation across the membrane. A homomeric c-ring of between 10-14 subunits forms the central stalk rotor element with the F(1) delta and epsilon subunits. The polypeptide is ATP synthase subunit c (Mycolicibacterium gilvum (strain PYR-GCK) (Mycobacterium gilvum (strain PYR-GCK))).